The primary structure comprises 146 residues: MAQKRPACTLKPECVQQLLVCSQEAKKSAYCPYSHFPVGAALLTQEGRIFKGCNIENACYPLGICAERTAIQKAVSEGYKDFRAIAIASDMQDDFISPCGACRQVMREFGTNWPVYMTKPDGTYIVMTVQELLPSSFGPEDLQKTQ.

Positions 13 to 140 (ECVQQLLVCS…ELLPSSFGPE (128 aa)) constitute a CMP/dCMP-type deaminase domain. Position 54–60 (54–60 (NIENACY)) interacts with substrate. Cys-65 serves as a coordination point for Zn(2+). The active-site Proton donor is the Glu-67. Zn(2+) is bound by residues Cys-99 and Cys-102.

This sequence belongs to the cytidine and deoxycytidylate deaminase family. As to quaternary structure, homotetramer. Requires Zn(2+) as cofactor. In terms of tissue distribution, highly expressed in granulocytes while expression is very low in fibroblasts, chondrocytes, monocytes, and T- as well as B-cell lines.

It carries out the reaction cytidine + H2O + H(+) = uridine + NH4(+). The enzyme catalyses 2'-deoxycytidine + H2O + H(+) = 2'-deoxyuridine + NH4(+). This enzyme scavenges exogenous and endogenous cytidine and 2'-deoxycytidine for UMP synthesis. The sequence is that of Cytidine deaminase from Homo sapiens (Human).